A 576-amino-acid chain; its full sequence is Threonine dehydratase, mitochondrial (576 aa).

At K109 the chain carries N6-(pyridoxal phosphate)lysine. ACT-like domains follow at residues 393-473 (VFML…DISD) and 495-566 (RIIS…DETD).

Belongs to the serine/threonine dehydratase family. In terms of assembly, homotetramer. Pyridoxal 5'-phosphate serves as cofactor.

The protein localises to the mitochondrion. It catalyses the reaction L-threonine = 2-oxobutanoate + NH4(+). Its pathway is amino-acid biosynthesis; L-isoleucine biosynthesis; 2-oxobutanoate from L-threonine: step 1/1. Its activity is regulated as follows. Isoleucine allosterically inhibits while valine allosterically activates this enzyme. This Saccharomyces cerevisiae (strain ATCC 204508 / S288c) (Baker's yeast) protein is Threonine dehydratase, mitochondrial (ILV1).